The following is a 273-amino-acid chain: F-actin-capping protein subunit alpha (273 aa).

The protein belongs to the F-actin-capping protein alpha subunit family. In terms of assembly, heterodimer of an alpha and a beta subunit.

It is found in the cytoplasm. The protein resides in the cytoskeleton. Functionally, F-actin-capping proteins bind in a Ca(2+)-independent manner to the fast growing ends of actin filaments (barbed end) thereby blocking the exchange of subunits at these ends. Unlike other capping proteins (such as gelsolin and severin), these proteins do not sever actin filaments. The chain is F-actin-capping protein subunit alpha (cap1) from Emericella nidulans (strain FGSC A4 / ATCC 38163 / CBS 112.46 / NRRL 194 / M139) (Aspergillus nidulans).